Here is a 306-residue protein sequence, read N- to C-terminus: GTPase Era (306 aa).

Residues 13–181 (YCGFIAIVGR…EKIVRESLHE (169 aa)) form the Era-type G domain. The interval 21 to 28 (GRPNVGKS) is G1. 21-28 (GRPNVGKS) lines the GTP pocket. Positions 47 to 51 (QTTRH) are G2. A G3 region spans residues 68 to 71 (DTPG). Residues 68-72 (DTPGL) and 130-133 (NKID) each bind GTP. Positions 130-133 (NKID) are G4. The interval 160 to 162 (ISA) is G5. Residues 212 to 289 (TGDELPYSVT…HLELWVKVKS (78 aa)) enclose the KH type-2 domain.

Belongs to the TRAFAC class TrmE-Era-EngA-EngB-Septin-like GTPase superfamily. Era GTPase family. As to quaternary structure, monomer.

The protein localises to the cytoplasm. The protein resides in the cell inner membrane. Functionally, an essential GTPase that binds both GDP and GTP, with rapid nucleotide exchange. Plays a role in 16S rRNA processing and 30S ribosomal subunit biogenesis and possibly also in cell cycle regulation and energy metabolism. This is GTPase Era from Pasteurella multocida (strain Pm70).